The following is a 124-amino-acid chain: Fluoride-specific ion channel FluC (124 aa).

4 helical membrane-spanning segments follow: residues 4-24 (ILAI…LAGG), 32-52 (AFPW…GLIM), 68-88 (GLTI…YETF), and 101-121 (LNVL…IMAA). Positions 75 and 78 each coordinate Na(+).

It belongs to the fluoride channel Fluc/FEX (TC 1.A.43) family.

It is found in the cell inner membrane. The catalysed reaction is fluoride(in) = fluoride(out). Na(+) is not transported, but it plays an essential structural role and its presence is essential for fluoride channel function. Functionally, fluoride-specific ion channel. Important for reducing fluoride concentration in the cell, thus reducing its toxicity. This is Fluoride-specific ion channel FluC from Geobacter sulfurreducens (strain ATCC 51573 / DSM 12127 / PCA).